Consider the following 272-residue polypeptide: Hydroxyacylglutathione hydrolase (272 aa).

The Zn(2+) site is built by His-62, His-64, Asp-66, His-67, His-126, Asp-146, and His-184.

Belongs to the metallo-beta-lactamase superfamily. Glyoxalase II family. As to quaternary structure, monomer. Zn(2+) is required as a cofactor.

It carries out the reaction an S-(2-hydroxyacyl)glutathione + H2O = a 2-hydroxy carboxylate + glutathione + H(+). It functions in the pathway secondary metabolite metabolism; methylglyoxal degradation; (R)-lactate from methylglyoxal: step 2/2. Its function is as follows. Thiolesterase that catalyzes the hydrolysis of S-D-lactoyl-glutathione to form glutathione and D-lactic acid. The protein is Hydroxyacylglutathione hydrolase of Saccharophagus degradans (strain 2-40 / ATCC 43961 / DSM 17024).